Reading from the N-terminus, the 1548-residue chain is Zinc finger MYM-type protein 4 (1548 aa).

An N-acetylalanine modification is found at A2. At T107 the chain carries Phosphothreonine. Residues S110 and S122 each carry the phosphoserine modification. Glycyl lysine isopeptide (Lys-Gly) (interchain with G-Cter in SUMO2) cross-links involve residues K140 and K149. S162 is subject to Phosphoserine. The interval 162–189 (SKETFSGKEKNRDLTYEREKRLDKPHKD) is disordered. A Glycyl lysine isopeptide (Lys-Gly) (interchain with G-Cter in SUMO2) cross-link involves residue K195. The residue at position 197 (S197) is a Phosphoserine. Residues K201 and K232 each participate in a glycyl lysine isopeptide (Lys-Gly) (interchain with G-Cter in SUMO2) cross-link. The residue at position 242 (S242) is a Phosphoserine. Residue K250 forms a Glycyl lysine isopeptide (Lys-Gly) (interchain with G-Cter in SUMO1); alternate linkage. K250 participates in a covalent cross-link: Glycyl lysine isopeptide (Lys-Gly) (interchain with G-Cter in SUMO2); alternate. Residues K260, K271, K273, K289, K327, K400, K428, and K430 each participate in a glycyl lysine isopeptide (Lys-Gly) (interchain with G-Cter in SUMO2) cross-link. 9 MYM-type zinc fingers span residues 362 to 402 (QLFC…PKDV), 414 to 457 (KDFC…RHEV), 464 to 499 (HKLCSDACFSKFRSANNLTMNCCENCGGYCYSGSGQ), 510 to 544 (KKFCSSSCITAYKQKSAKITPCALCKSLRSSAEMI), 554 to 592 (ELFCSVNCLSAYRVKMVTSAGVQVQCNSCKTSAIPQYHL), 600 to 631 (RNFCSYSCVVAFQNLFNKPTGMNSSVVPLSQG), 708 to 742 (FQFCGKNCSDEYKKINNVMAMCEYCKIEKIVKETV), 749 to 788 (KSFCSEGCKLLYKHDLAKRWGNHCKMCSYCLQTSPKLVQN), and 795 to 829 (EEFCCEECMSKYTVLFYQMAKCDACKRQGKLSESL). S1030 is modified (phosphoserine). Residues K1035 and K1061 each participate in a glycyl lysine isopeptide (Lys-Gly) (interchain with G-Cter in SUMO2) cross-link. 2 positions are modified to phosphoserine: S1064 and S1071. Residues K1080 and K1127 each participate in a glycyl lysine isopeptide (Lys-Gly) (interchain with G-Cter in SUMO2) cross-link. Positions 1124-1134 (SELKQFSKGET) are enriched in basic and acidic residues. Disordered stretches follow at residues 1124–1183 (SELK…KSIV) and 1231–1260 (KCGGVEQASSSPRSDPLGSTQDHALSQESS). Over residues 1160–1181 (SRTRRRHRDGFPQPRRRGRKKS) the composition is skewed to basic residues. S1181 and S1256 each carry phosphoserine. Over residues 1237–1260 (QASSSPRSDPLGSTQDHALSQESS) the composition is skewed to polar residues. A Glycyl lysine isopeptide (Lys-Gly) (interchain with G-Cter in SUMO2) cross-link involves residue K1431. Residues S1539, S1542, and S1547 each carry the phosphoserine modification.

As to expression, expressed at higher level in heart, skeletal muscle, kidney and liver.

In terms of biological role, plays a role in the regulation of cell morphology and cytoskeletal organization. The sequence is that of Zinc finger MYM-type protein 4 (ZMYM4) from Homo sapiens (Human).